The following is a 2097-amino-acid chain: 1-phosphatidylinositol 3-phosphate 5-kinase (2097 aa).

Residues 1-44 (MATDDKSSPTLDSANDLPRSPASPSHLTHFKPLTPDQDEPPFKS) form a disordered region. A2 carries the N-acetylalanine modification. 2 positions are modified to phosphoserine; by autocatalysis: S23 and S48. Positions 56-122 (NKERGEGGQG…AEPACGGHDP (67 aa)) are disordered. Residues 66-81 (EQQSPSSSWASPQIPS) show a composition bias toward low complexity. Residue S88 is modified to Phosphoserine. An FYVE-type zinc finger spans residues 158–218 (DSQCKECYDC…ACTYCRKIAL (61 aa)). Residues C164, C167, C180, C183, C188, C191, C210, and C213 each coordinate Zn(2+). 3 positions are modified to phosphoserine: S299, S307, and S312. S318 is subject to Phosphoserine; by PKB/AKT1 or PKB/AKT2. The residue at position 329 (S329) is a Phosphoserine. One can recognise a DEP domain in the interval 365 to 440 (HTSGMEFQDH…DEYALYRPLQ (76 aa)). A compositionally biased stretch (polar residues) spans 442–459 (TEFSETPSPDSDSVNSVE). The tract at residues 442–469 (TEFSETPSPDSDSVNSVEGHSEPSWFKD) is disordered. A compositionally biased stretch (basic and acidic residues) spans 460–469 (GHSEPSWFKD). S475 carries the phosphoserine modification. A disordered region spans residues 484–505 (GDDNLANSASPSKRTSVSSFQS). A compositionally biased stretch (polar residues) spans 488-505 (LANSASPSKRTSVSSFQS). The chaperonin-like domain stretch occupies residues 616–868 (MMALLQQLLQ…MICVAYHSQL (253 aa)). 4 disordered regions span residues 895 to 928 (GRGE…EDST), 989 to 1022 (AVGN…QDDT), 1171 to 1194 (HSKD…EERG), and 1511 to 1555 (FQQE…HNGE). Polar residues predominate over residues 902-912 (SQEQVSGSSLP). The segment covering 1175–1184 (ASCTSGGKSG) has biased composition (polar residues). Positions 1185-1194 (NKTESDEERG) are enriched in basic and acidic residues. S1543 and S1548 each carry phosphoserine. At S1668 the chain carries Phosphoserine; by autocatalysis. A disordered region spans residues 1697–1742 (EGLPANSALDNRPKSSSPIRLPEISGGQTNRTVEAEPQPTKKASGM). Position 1753 is a phosphoserine (S1753). One can recognise a PIPK domain in the interval 1757-2083 (SSQKRETLRG…RFCEAMDKYF (327 aa)). The segment at 1781–1800 (GLESQGLEPQDEVDGGDTQK) is disordered. The catalytic stretch occupies residues 1841-2097 (EEEFIRSLSH…DHWTGLDLNC (257 aa)). 2 positions are modified to phosphoserine; by autocatalysis: S1968 and S2052.

Component of the PI(3,5)P2 regulatory complex/PAS complex, at least composed of PIKFYVE, FIG4 and VAC14. VAC14 nucleates the assembly of the complex and serves as a scaffold by pentamerizing into a star-shaped structure, which can bind a single copy each of PIKFYVE and FIG4 and coordinates their activities. Interacts (via chaperonin-like domain) with RABEPK; the interaction recruits RABEPK to the endosomal membrane. Interacts with SPAG9. Interacts with EGFR. Requires Mn(2+) as cofactor. Phosphorylated in response to insulin at Ser-318 in a protein kinase B (PKB)-dependent manner. Autophosphorylates which down-regulates lipid product formation. In terms of processing, autophosphorylates which inhibits its own phosphatidylinositol 3-phosphate 5-kinase activity, stimulates FIG4 lipid phosphatase activity and down-regulates lipid product formation. Dephosphorylated by FIG4 in the PI(3,5)P2 regulatory complex, at Ser-48, Ser-1668 and Ser-2052. Phosphorylated in response to insulin at Ser-318 in a protein kinase B (PKB)-dependent manner. In terms of tissue distribution, ubiquitous.

The protein resides in the endosome membrane. The protein localises to the early endosome membrane. Its subcellular location is the cytoplasmic vesicle. It is found in the phagosome membrane. It localises to the late endosome membrane. It carries out the reaction a 1,2-diacyl-sn-glycero-3-phospho-(1D-myo-inositol-3-phosphate) + ATP = a 1,2-diacyl-sn-glycero-3-phospho-(1D-myo-inositol-3,5-bisphosphate) + ADP + H(+). The catalysed reaction is a 1,2-diacyl-sn-glycero-3-phospho-(1D-myo-inositol) + ATP = a 1,2-diacyl-sn-glycero-3-phospho-(1D-myo-inositol-5-phosphate) + ADP + H(+). It catalyses the reaction L-seryl-[protein] + ATP = O-phospho-L-seryl-[protein] + ADP + H(+). Inhibited by apilimod and YM201636. In terms of biological role, dual specificity kinase implicated in myriad essential cellular processes such as maintenance of endomembrane homeostasis, and endocytic-vacuolar pathway, lysosomal trafficking, nuclear transport, stress- or hormone-induced signaling and cell cycle progression. The PI(3,5)P2 regulatory complex regulates both the synthesis and turnover of phosphatidylinositol 3,5-bisphosphate (PtdIns(3,5)P2). Sole enzyme to catalyze the phosphorylation of phosphatidylinositol 3-phosphate on the fifth hydroxyl of the myo-inositol ring, to form (PtdIns(3,5)P2). Also catalyzes the phosphorylation of phosphatidylinositol on the fifth hydroxyl of the myo-inositol ring, to form phosphatidylinositol 5-phosphate (PtdIns(5)P). Has serine-protein kinase activity and is able to autophosphorylate and transphosphorylate. Autophosphorylation inhibits its own phosphatidylinositol 3-phosphate 5-kinase activity, stimulates FIG4 lipid phosphatase activity and down-regulates lipid product formation. Involved in key endosome operations such as fission and fusion in the course of endosomal cargo transport. Required for the maturation of early into late endosomes, phagosomes and lysosomes. Regulates vacuole maturation and nutrient recovery following engulfment of macromolecules, initiates the redistribution of accumulated lysosomal contents back into the endosome network. Critical regulator of the morphology, degradative activity, and protein turnover of the endolysosomal system in macrophages and platelets. In neutrophils, critical to perform chemotaxis, generate ROS, and undertake phagosome fusion with lysosomes. Plays a key role in the processing and presentation of antigens by major histocompatibility complex class II (MHC class II) mediated by CTSS. Regulates melanosome biogenesis by controlling the delivery of proteins from the endosomal compartment to the melanosome. Essential for systemic glucose homeostasis, mediates insulin-induced signals for endosome/actin remodeling in the course of GLUT4 translocation/glucose uptake activation. Supports microtubule-based endosome-to-trans-Golgi network cargo transport, trhough association with SPAG9 and RABEPK. Mediates EGFR trafficking to the nucleus. The protein is 1-phosphatidylinositol 3-phosphate 5-kinase of Mus musculus (Mouse).